The following is a 213-amino-acid chain: MLLLWQSRIMPGSEANIYITMTEYLLLLIGTVLVNNFVLVKFLGLCPFMGVSKKLETAIGMGLATTFVLTLASVCAYLVESYVLRPLGIEYLRTMSFILVIAVVVQFTEMVVHKTSPTLYRLLGIFLPLITTNCAVLGVALLNINENHNFIQSIIYGFGAAVGFSLVLILFASMRERIHVADVPAPFKGASIAMITAGLMSLAFMGFTGLVKL.

Over 1-24 (MLLLWQSRIMPGSEANIYITMTEY) the chain is Periplasmic. A helical transmembrane segment spans residues 25-45 (LLLLIGTVLVNNFVLVKFLGL). Residues 46–58 (CPFMGVSKKLETA) are Cytoplasmic-facing. Residues 59 to 79 (IGMGLATTFVLTLASVCAYLV) traverse the membrane as a helical segment. The Periplasmic portion of the chain corresponds to 80–86 (ESYVLRP). The chain crosses the membrane as a helical span at residues 87–107 (LGIEYLRTMSFILVIAVVVQF). At 108 to 121 (TEMVVHKTSPTLYR) the chain is on the cytoplasmic side. Residues 122-142 (LLGIFLPLITTNCAVLGVALL) form a helical membrane-spanning segment. Over 143–153 (NINENHNFIQS) the chain is Periplasmic. A helical transmembrane segment spans residues 154 to 174 (IIYGFGAAVGFSLVLILFASM). The Cytoplasmic segment spans residues 175–190 (RERIHVADVPAPFKGA). The helical transmembrane segment at 191–211 (SIAMITAGLMSLAFMGFTGLV) threads the bilayer. At 212–213 (KL) the chain is on the periplasmic side.

It belongs to the NqrDE/RnfAE family. The complex is composed of six subunits: RnfA, RnfB, RnfC, RnfD, RnfE and RnfG.

It localises to the cell inner membrane. Its function is as follows. Part of a membrane-bound complex that couples electron transfer with translocation of ions across the membrane. The sequence is that of Ion-translocating oxidoreductase complex subunit A from Vibrio cholerae serotype O1 (strain ATCC 39541 / Classical Ogawa 395 / O395).